A 188-amino-acid polypeptide reads, in one-letter code: MTEYKLVVVGAGGVGKSALTIQLIQNHFVDEYDPTIEDSYRKQVVIDGETCLLDILDTAGQEEYSAMRDQYMRTGEGFLCVFAINNTKSFEDIHHYREQIKRVKDSEDVPMVLVGNKCDLPSRTVDTKQAQDLARSYGIPFIETSAKTRQGGDDAFYTLVREIRKHKEKMSKDGKKKKKKSKTKCIIM.

Residue Met1 is modified to N-acetylmethionine. Thr2 carries the N-acetylthreonine; in GTPase KRas, N-terminally processed modification. GTP is bound by residues 10–18, 29–35, and 59–60; these read GAGGVGKSA, VDEYDPT, and AG. The Effector region motif lies at 32-40; that stretch reads YDPTIEDSY. Residue Lys104 is modified to N6-acetyllysine. 116–119 provides a ligand contact to GTP; sequence NKCD. Residues 166 to 185 are hypervariable region; sequence HKEKMSKDGKKKKKKSKTKC. The interval 167–188 is disordered; it reads KEKMSKDGKKKKKKSKTKCIIM. Cys185 bears the Cysteine methyl ester mark. Cys185 is lipidated: S-farnesyl cysteine. The propeptide at 186–188 is removed in mature form; sequence IIM.

This sequence belongs to the small GTPase superfamily. Ras family. In terms of assembly, interacts with PHLPP. Interacts (active GTP-bound form preferentially) with RGS14. Interacts (when farnesylated) with PDE6D; this promotes dissociation from the cell membrane. Interacts with SOS1. Interacts (when farnesylated) with GPR31. Interacts with RAP1GDS1. Interacts (active GTP-bound form) with both SHOC2 and PP1c (all isoforms) to form a tertiary complex; SHOC2 and PP1c preferably bind M-Ras/MRAS, but they also bind K-Ras/KRAS, N-Ras/NRAS and H-Ras/HRAS. Interacts (GTP-bound form) with MAPKAP1/SIN1; inhibiting K-Ras/KRAS activity. In terms of processing, acetylation at Lys-104 prevents interaction with guanine nucleotide exchange factors (GEFs).

It localises to the cell membrane. The protein resides in the cytoplasm. The protein localises to the cytosol. It catalyses the reaction GTP + H2O = GDP + phosphate + H(+). Its activity is regulated as follows. Alternates between an inactive form bound to GDP and an active form bound to GTP. Activated by a guanine nucleotide-exchange factor (GEF) and inactivated by a GTPase-activating protein (GAP). Interaction with SOS1 promotes exchange of bound GDP to GTP. Ras proteins bind GDP/GTP and possess intrinsic GTPase activity. Plays an important role in the regulation of cell proliferation. Plays a role in promoting oncogenic events by inducing transcriptional silencing of tumor suppressor genes (TSGs) in colorectal cancer (CRC) cells in a ZNF304-dependent manner. The polypeptide is GTPase KRas (KRAS) (Monodelphis domestica (Gray short-tailed opossum)).